A 429-amino-acid polypeptide reads, in one-letter code: DNA polymerase delta small subunit (429 aa).

The protein belongs to the DNA polymerase delta/II small subunit family. Heterodimer with subunits of 125 kDa and 50 kDa.

The protein localises to the nucleus. The catalysed reaction is DNA(n) + a 2'-deoxyribonucleoside 5'-triphosphate = DNA(n+1) + diphosphate. Functionally, the function of the small subunit is not yet clear. This Oryza sativa subsp. japonica (Rice) protein is DNA polymerase delta small subunit (POLD2).